The primary structure comprises 596 residues: Elongation factor 4 (596 aa).

A tr-type G domain is found at 2 to 184 (KHIRNFSIIA…VIVEQIPPPE (183 aa)). GTP-binding positions include 14-19 (DHGKST) and 131-134 (NKID).

The protein belongs to the TRAFAC class translation factor GTPase superfamily. Classic translation factor GTPase family. LepA subfamily.

It localises to the cell inner membrane. It carries out the reaction GTP + H2O = GDP + phosphate + H(+). Functionally, required for accurate and efficient protein synthesis under certain stress conditions. May act as a fidelity factor of the translation reaction, by catalyzing a one-codon backward translocation of tRNAs on improperly translocated ribosomes. Back-translocation proceeds from a post-translocation (POST) complex to a pre-translocation (PRE) complex, thus giving elongation factor G a second chance to translocate the tRNAs correctly. Binds to ribosomes in a GTP-dependent manner. The protein is Elongation factor 4 of Shewanella oneidensis (strain ATCC 700550 / JCM 31522 / CIP 106686 / LMG 19005 / NCIMB 14063 / MR-1).